Reading from the N-terminus, the 617-residue chain is Hemagglutinin glycoprotein (617 aa).

Residues 1 to 37 lie on the Intravirion side of the membrane; it reads MSPQRDRINAFYKDNPHPKGSRIVINREHLMIDRPYV. The interval 1-154 is stalk; the sequence is MSPQRDRINA…RIKLDYDQYC (154 aa). A helical; Signal-anchor for type II membrane protein transmembrane segment spans residues 38 to 58; the sequence is LLAVLFVMFLSLIGLLAIAGI. Residues 59-617 are Virion surface-facing; sequence RLHRAAIYTA…VTREDGTNRR (559 aa). Residues Asn-168, Asn-187, Asn-200, Asn-215, and Asn-238 are each glycosylated (N-linked (GlcNAc...) asparagine; by host). 5 disulfide bridges follow: Cys-188-Cys-606, Cys-287-Cys-300, Cys-381-Cys-494, Cys-386-Cys-394, and Cys-570-Cys-579. The interaction with host NECTIN4 receptor stretch occupies residues 458 to 543; that stretch reads PMKNLALGVI…VEHAVVYYVY (86 aa).

The protein belongs to the paramyxoviruses hemagglutinin-neuraminidase family. Non-sialidase subfamily. Homodimer; disulfide-linked. Further forms homotetramer (dimer of dimers). Interacts (via C-terminus) with human NECTIN4 (via N-terminus); this interaction allows attachment to the respiratory epithelium and viral entry. Interacts (via C-terminus) with human SLAMF1/CD150 (via N-terminus); this interaction allows attachment and viral entry into the CD150-expressing immune cells. Interacts with human CD46 antigen (via N-terminus); this interaction allows attachment and viral entry of vaccine and laboratory-adapted strains.

Its subcellular location is the virion membrane. It localises to the host cell membrane. Functionally, attaches the virus to the human SLAMF1/CD150 receptor for entry into host dendritic cells, macrophages, activated memory T cells and naive or memory B cells, thereby explaining the long immunosuppression that follows infection. In the respiratory airways, binds to the NECTIN4 receptor for entry into the host cell. Binding of H protein to the receptor induces a conformational change that allows the F protein to trigger virion/cell membranes fusion. The vaccine and laboratory-adapted strains use host CD46 as an alternate receptor. The high degree of interaction between H and CD46 results in down-regulation of the latter from the surface of infected cells, rendering them more sensitive to c3b-mediated complement lysis. This chain is Hemagglutinin glycoprotein (H), found in Measles virus (strain Edmonston) (MeV).